We begin with the raw amino-acid sequence, 982 residues long: MSPLKIQGPIRIRSMQTGITKWKEGSFEIVEKENKVSLVVHYNTGGIPRIFQLSHNIKNVVLRPSGAKQSRLMLTLQDNSFLSIDKVPSKDAEEMRLFLDAVHQNRLNAVAMKPSQGSGSFGAILGSRTSQKETHRQLSYSDNQVSSKRGSLETKDDIPFRKVLGNPGRASIKTAAGSGITATRTIPSLTSTSTPLRSGLLENRTEKRKRMLSSGSELNEDYPKENDSSSNNKAMTDPSRKYLTSSREKQLSLKQSEENRTSGLLPLQSSSFYGSRAASKDYSPSSTNLDRTNISSQTPSAKRSLGFLPQPAPLSVKKLRCNQDYTGWNKPRLPLSSHQQQLQGFSNLGNTCYMNAILQSLFSLQSFANDLLKQGIPWKKIPLNALISRRFAHLLVKKDICNSETKKDLLKKVKNAISATAERFSGYMQNDAHEFLSQCLDQLKEDMEKLNKTWKTEPVPGEENSPDVTATRVYTCPVITNLEFEVQHSIICKACGEIIPKREQFNDLSIDLPRRKKPLPPRSIQDSLDLFFRAEELEYSCEKCGGKCALVRHKFNRLPRILILHLKRYSFNVALSLNNKIGQQVIIPRYLTLSSHCTENTKPPFNLGWSAQMAISRPLKASQMVNSCITSPSTPSKNFTFKSKSSLALSLDSDSEDELKRSVALSQRLCEISSSEQQQEDLEKDSKSCKLEPDKSELENSGFDAMSEEELLAAVLEISKREASPSPSHEDDDKPTSSPDTGFAEDDIQEMPENPDPMETEKPKTITEPDPASFTEITKDCDENKENKTPEGSQGEVDWLQQYDMEREREEQELQQALAQSLQEQEAWEQKEDDDLKRATELSLQEFNNSFLDSLGSDEDSGNEDVLDMEYTEAEAEELKRNAETGNLPHSYRLISVVSHIGSTSSSGHYISDVYDIKKQAWFTYNDLEVSKIQEASVQSDRDRSGYIFFYMHKEIFDELLETEKNSQALSMEVGKTTRQAS.

The KEN box 1 signature appears at 32-34 (KEN). 2 short sequence motifs (D-box) span residues 71-79 (RLMLTLQDN) and 96-105 (RLFLDAVHQN). A Phosphoserine modification is found at Ser-115. The interval 128-162 (RTSQKETHRQLSYSDNQVSSKRGSLETKDDIPFRK) is disordered. A compositionally biased stretch (polar residues) spans 137-149 (QLSYSDNQVSSKR). Over residues 150 to 160 (GSLETKDDIPF) the composition is skewed to basic and acidic residues. The D-box 3 motif lies at 161 to 169 (RKVLGNPGR). The residue at position 171 (Ser-171) is a Phosphoserine. Residues 183–201 (TRTIPSLTSTSTPLRSGLL) show a composition bias toward low complexity. A disordered region spans residues 183 to 307 (TRTIPSLTST…TPSAKRSLGF (125 aa)). Ser-213 carries the phosphoserine modification. Positions 224–226 (KEN) match the KEN box 2 motif. Over residues 246–260 (SREKQLSLKQSEENR) the composition is skewed to basic and acidic residues. Positions 282–301 (YSPSSTNLDRTNISSQTPSA) are enriched in polar residues. In terms of domain architecture, USP spans 343 to 954 (QGFSNLGNTC…SGYIFFYMHK (612 aa)). The active-site Nucleophile is Cys-352. Ser-631 is subject to Phosphoserine; by CDK2. Phosphoserine is present on residues Ser-653 and Ser-655. 2 disordered regions span residues 672 to 705 (ISSS…GFDA) and 720 to 798 (KREA…GEVD). Basic and acidic residues-rich tracts occupy residues 684 to 698 (KDSK…KSEL) and 720 to 735 (KREA…DDKP). In terms of domain architecture, UIM 1 spans 707–726 (SEEELLAAVLEISKREASPS). Ser-773 is modified (phosphoserine). Residues 777-789 (ITKDCDENKENKT) show a composition bias toward basic and acidic residues. Residues 785-787 (KEN) carry the KEN box 3 motif. UIM domains follow at residues 809-828 (REEQ…QEAW) and 831-850 (KEDD…FNNS). The active-site Proton acceptor is His-909.

This sequence belongs to the peptidase C19 family. Interacts with FZR1/CDH1. Interacts with CDT1. Polyubiquitinated via 'Lys-11'-linked ubiquitin by the APC(CDH1) complex during late mitosis, leading to its degradation. Able to mediate auto-deubiquitination. In terms of processing, phosphorylated at Ser-631 by CDK2 during G1/S phase but not during mitosis; phosphorylation at Ser-631 is required for deubiquitinase activity. Also polyubiquitinated during early G1 phase, without leading to degradation. Phosphorylated at Ser-115 by ATM following DNA damage, which in turn increases its deubiquitination activity towards BLM.

The protein resides in the nucleus. It is found in the chromosome. The enzyme catalyses Thiol-dependent hydrolysis of ester, thioester, amide, peptide and isopeptide bonds formed by the C-terminal Gly of ubiquitin (a 76-residue protein attached to proteins as an intracellular targeting signal).. Functionally, deubiquitinase that plays a role in different processes including cell cycle regulation, DNA replication or DNA damage response. Antagonizes the anaphase-promoting complex (APC/C) during G1/S transition by mediating deubiquitination of cyclin-A (CCNA1 and CCNA2), thereby promoting S phase entry. Specifically mediates deubiquitination of 'Lys-11'-linked polyubiquitin chains, a specific ubiquitin-linkage type mediated by the APC/C complex. Phosphorylation at Ser-628 during G1/S phase maximizes the deubiquitinase activity, leading to prevent degradation of cyclin-A (CCNA1 and CCNA2). Plays an important role in the regulation of DNA replication by stabilizing the licensing factor CDT1. Also plays an essential role beyond S-phase entry to promote the efficiency and fidelity of replication by deubiquitinating checkpoint kinase 1/CHK1, promoting its stability. Sustains the DNA damage response (DDR) by deubiquitinating and stabilizing the ATP-dependent DNA helicase BLM. Mechanistically, DNA double-strand breaks (DSB) promotes ATM-mediated phosphorylation of USP37 and enhances the binding between USP37 and BLM. Promotes cell migration by deubiquitinating and stabilizing the epithelial-mesenchymal transition (EMT)-inducing transcription factor SNAI. Plays a role in the regulation of mitotic spindle assembly and mitotic progression by associating with chromatin-associated WAPL and stabilizing it through deubiquitination. This is Ubiquitin carboxyl-terminal hydrolase 37 (USP37) from Sus scrofa (Pig).